A 276-amino-acid chain; its full sequence is UPF0761 membrane protein APL_1950 (276 aa).

7 consecutive transmembrane segments (helical) span residues 33–53 (TLAI…FPIF), 90–110 (MGIV…QSID), 125–145 (IFIS…LAGG), 147–167 (IAIS…LLSF), 171–191 (LLQY…YWLV), 203–223 (LGAI…VWYI), and 239–259 (LPIM…GGLI).

The protein belongs to the UPF0761 family.

The protein resides in the cell inner membrane. The polypeptide is UPF0761 membrane protein APL_1950 (Actinobacillus pleuropneumoniae serotype 5b (strain L20)).